The following is a 295-amino-acid chain: Tetrahydromethanopterin S-methyltransferase subunit E (295 aa).

A run of 7 helical transmembrane segments spans residues 4-24, 60-80, 87-107, 140-160, 161-181, 234-254, and 255-275; these read MITG…AGAA, GEPV…FVLM, VIMA…TYAV, GFIV…PIPG, FAHP…IGAI, YGGP…FWNT, and IVFG…LLII.

Belongs to the MtrE family. As to quaternary structure, the complex is composed of 8 subunits; MtrA, MtrB, MtrC, MtrD, MtrE, MtrF, MtrG and MtrH.

The protein localises to the cell membrane. The enzyme catalyses 5-methyl-5,6,7,8-tetrahydromethanopterin + coenzyme M + 2 Na(+)(in) = 5,6,7,8-tetrahydromethanopterin + methyl-coenzyme M + 2 Na(+)(out). Its pathway is one-carbon metabolism; methanogenesis from CO(2); methyl-coenzyme M from 5,10-methylene-5,6,7,8-tetrahydromethanopterin: step 2/2. In terms of biological role, part of a complex that catalyzes the formation of methyl-coenzyme M and tetrahydromethanopterin from coenzyme M and methyl-tetrahydromethanopterin. This is an energy-conserving, sodium-ion translocating step. The polypeptide is Tetrahydromethanopterin S-methyltransferase subunit E (Methanothermobacter marburgensis (strain ATCC BAA-927 / DSM 2133 / JCM 14651 / NBRC 100331 / OCM 82 / Marburg) (Methanobacterium thermoautotrophicum)).